We begin with the raw amino-acid sequence, 404 residues long: Serine/threonine transporter SstT (404 aa).

The next 9 helical transmembrane spans lie at 11–31 (IINANLVLQIIFGIAAGIILA), 44–64 (LGGLFVGALKAVAPILVFVLV), 82–102 (IISLYLIGTLLAALTAVTMSF), 144–164 (TANYIGILAWAIGLGIALHHA), 179–199 (VSFIVRFIIRLAPIGIFGLVA), 218–238 (GVLLGSMAIVALVINPLMVFI), 290–310 (IPLGATINMAGAAITITVLTL), 316–336 (MGIQVDMFTALLLSVVAAISA), and 363–383 (VAMQVVGVGFIIGVIQDSAET).

Belongs to the dicarboxylate/amino acid:cation symporter (DAACS) (TC 2.A.23) family.

It localises to the cell inner membrane. The enzyme catalyses L-serine(in) + Na(+)(in) = L-serine(out) + Na(+)(out). It carries out the reaction L-threonine(in) + Na(+)(in) = L-threonine(out) + Na(+)(out). Its function is as follows. Involved in the import of serine and threonine into the cell, with the concomitant import of sodium (symport system). This is Serine/threonine transporter SstT from Desulfotalea psychrophila (strain LSv54 / DSM 12343).